The chain runs to 144 residues: Glycine-rich protein DC9.1 (144 aa).

Residues 5–25 (IFLLLGLSIAFAILISSEVAA) traverse the membrane as a helical segment. 11 repeat units span residues 37-42 (GYNNGG), 43-48 (GYHNGG), 50-55 (GYNNGG), 56-61 (GYHNGG), 63-68 (GYNNGG), 69-74 (GYHNGG), 76-81 (GYNNGG), 82-87 (GYHNGG), 89-94 (GYNNGG), 102-107 (GYNNGG), and 108-113 (GHHGGG). The interval 37-113 (GYNNGGGYHN…NNGGGHHGGG (77 aa)) is 11 X 6 AA tandem repeats of G-Y-[NH]-N-G -G.

This sequence belongs to the GRP family.

The protein resides in the membrane. The protein is Glycine-rich protein DC9.1 of Daucus carota (Wild carrot).